The primary structure comprises 227 residues: Uracil-DNA glycosylase (227 aa).

Residue Asp65 is the Proton acceptor of the active site.

The protein belongs to the uracil-DNA glycosylase (UDG) superfamily. UNG family.

Its subcellular location is the cytoplasm. It carries out the reaction Hydrolyzes single-stranded DNA or mismatched double-stranded DNA and polynucleotides, releasing free uracil.. In terms of biological role, excises uracil residues from the DNA which can arise as a result of misincorporation of dUMP residues by DNA polymerase or due to deamination of cytosine. This Bacillus velezensis (strain DSM 23117 / BGSC 10A6 / LMG 26770 / FZB42) (Bacillus amyloliquefaciens subsp. plantarum) protein is Uracil-DNA glycosylase.